A 223-amino-acid chain; its full sequence is Large ribosomal subunit protein bL21 (223 aa).

It belongs to the bacterial ribosomal protein bL21 family. Part of the 50S ribosomal subunit. Contacts protein L20.

In terms of biological role, this protein binds to 23S rRNA in the presence of protein L20. The sequence is that of Large ribosomal subunit protein bL21 from Mesorhizobium japonicum (strain LMG 29417 / CECT 9101 / MAFF 303099) (Mesorhizobium loti (strain MAFF 303099)).